We begin with the raw amino-acid sequence, 131 residues long: Small ribosomal subunit protein uS8 (131 aa).

This sequence belongs to the universal ribosomal protein uS8 family. In terms of assembly, part of the 30S ribosomal subunit. Contacts proteins S5 and S12.

One of the primary rRNA binding proteins, it binds directly to 16S rRNA central domain where it helps coordinate assembly of the platform of the 30S subunit. This is Small ribosomal subunit protein uS8 from Acinetobacter baylyi (strain ATCC 33305 / BD413 / ADP1).